A 200-amino-acid polypeptide reads, in one-letter code: Recombination protein RecR (200 aa).

A C4-type zinc finger spans residues 59–74 (CEVCGNVCESSPCTIC). Residues 82–177 (GTICVVEEPK…KVTRLASGLP (96 aa)) form the Toprim domain.

It belongs to the RecR family.

Its function is as follows. May play a role in DNA repair. It seems to be involved in an RecBC-independent recombinational process of DNA repair. It may act with RecF and RecO. In Bifidobacterium animalis subsp. lactis (strain AD011), this protein is Recombination protein RecR.